Here is a 219-residue protein sequence, read N- to C-terminus: Ran-binding protein 1 homolog c (219 aa).

Basic and acidic residues predominate over residues 1–11 (MASTEPERENR). Disordered regions lie at residues 1 to 30 (MAST…VAPI) and 160 to 219 (QVGK…EAST). Acidic residues predominate over residues 12-23 (EDETEVNEDEDT). Residues 26-161 (QVAPIVRLEE…FTEIAESQQV (136 aa)) enclose the RanBD1 domain. The span at 185–219 (SEEKAKEAEEKEPAKEDKETKKEKVEEEKKTEAST) shows a compositional bias: basic and acidic residues.

The protein localises to the nucleus. The protein resides in the nuclear pore complex. This is Ran-binding protein 1 homolog c (RANBP1C) from Arabidopsis thaliana (Mouse-ear cress).